The chain runs to 369 residues: Putative agmatine deiminase (369 aa).

The Amidino-cysteine intermediate role is filled by C361.

The protein belongs to the agmatine deiminase family.

The catalysed reaction is agmatine + H2O = N-carbamoylputrescine + NH4(+). The protein is Putative agmatine deiminase of Streptococcus mutans serotype c (strain ATCC 700610 / UA159).